Here is a 195-residue protein sequence, read N- to C-terminus: Probable nicotinate-nucleotide adenylyltransferase (195 aa).

This sequence belongs to the NadD family.

The catalysed reaction is nicotinate beta-D-ribonucleotide + ATP + H(+) = deamido-NAD(+) + diphosphate. It participates in cofactor biosynthesis; NAD(+) biosynthesis; deamido-NAD(+) from nicotinate D-ribonucleotide: step 1/1. Functionally, catalyzes the reversible adenylation of nicotinate mononucleotide (NaMN) to nicotinic acid adenine dinucleotide (NaAD). This Chlorobaculum tepidum (strain ATCC 49652 / DSM 12025 / NBRC 103806 / TLS) (Chlorobium tepidum) protein is Probable nicotinate-nucleotide adenylyltransferase.